Consider the following 419-residue polypeptide: Gamma-glutamyl phosphate reductase (419 aa).

It belongs to the gamma-glutamyl phosphate reductase family.

The protein localises to the cytoplasm. The catalysed reaction is L-glutamate 5-semialdehyde + phosphate + NADP(+) = L-glutamyl 5-phosphate + NADPH + H(+). It functions in the pathway amino-acid biosynthesis; L-proline biosynthesis; L-glutamate 5-semialdehyde from L-glutamate: step 2/2. Catalyzes the NADPH-dependent reduction of L-glutamate 5-phosphate into L-glutamate 5-semialdehyde and phosphate. The product spontaneously undergoes cyclization to form 1-pyrroline-5-carboxylate. The sequence is that of Gamma-glutamyl phosphate reductase from Caldicellulosiruptor saccharolyticus (strain ATCC 43494 / DSM 8903 / Tp8T 6331).